A 467-amino-acid polypeptide reads, in one-letter code: Inactive pancreatic lipase-related protein 1 (467 aa).

Residues 1 to 17 (MVSIWTIALFLLGAAKA) form the signal peptide. 2 disulfide bridges follow: cysteine 21-cysteine 27 and cysteine 109-cysteine 120. Asparagine 157 is a glycosylation site (N-linked (GlcNAc...) asparagine). The active-site Nucleophile is the serine 171. Aspartate 194 functions as the Charge relay system in the catalytic mechanism. The Ca(2+) site is built by glutamate 205, arginine 208, aspartate 210, and aspartate 213. Cysteine 255 and cysteine 279 are disulfide-bonded. Catalysis depends on histidine 281, which acts as the Charge relay system. 3 disulfide bridges follow: cysteine 303–cysteine 314, cysteine 317–cysteine 322, and cysteine 451–cysteine 467. The PLAT domain occupies 356-467 (WRYGVSITLS…EDVLLTLTPC (112 aa)).

It belongs to the AB hydrolase superfamily. Lipase family. In terms of tissue distribution, detected in pancreas (at protein level).

The protein resides in the secreted. May function as inhibitor of dietary triglyceride digestion. Lacks detectable lipase activity towards triglycerides, diglycerides, phosphatidylcholine, galactolipids or cholesterol esters (in vitro). This is Inactive pancreatic lipase-related protein 1 (PNLIPRP1) from Canis lupus familiaris (Dog).